The chain runs to 429 residues: Citrate synthase, plasmid (429 aa).

Catalysis depends on residues histidine 306 and aspartate 364.

This sequence belongs to the citrate synthase family.

It catalyses the reaction oxaloacetate + acetyl-CoA + H2O = citrate + CoA + H(+). Its pathway is carbohydrate metabolism; tricarboxylic acid cycle; isocitrate from oxaloacetate: step 1/2. Its function is as follows. The exact function of the plasmid-encoded citrate synthase is not clear, it could help nodulation by allowing the bacteria to use citrate as a chelator of iron and calcium. The protein is Citrate synthase, plasmid (pcsA) of Rhizobium tropici.